Here is a 424-residue protein sequence, read N- to C-terminus: Enolase (424 aa).

Gln162 is a binding site for (2R)-2-phosphoglycerate. Glu204 serves as the catalytic Proton donor. Positions 241, 284, and 311 each coordinate Mg(2+). (2R)-2-phosphoglycerate-binding residues include Lys336, Arg365, Ser366, and Lys387. Lys336 (proton acceptor) is an active-site residue.

It belongs to the enolase family. Mg(2+) serves as cofactor.

The protein resides in the cytoplasm. The protein localises to the secreted. It is found in the cell surface. It catalyses the reaction (2R)-2-phosphoglycerate = phosphoenolpyruvate + H2O. Its pathway is carbohydrate degradation; glycolysis; pyruvate from D-glyceraldehyde 3-phosphate: step 4/5. Functionally, catalyzes the reversible conversion of 2-phosphoglycerate (2-PG) into phosphoenolpyruvate (PEP). It is essential for the degradation of carbohydrates via glycolysis. In Chelativorans sp. (strain BNC1), this protein is Enolase.